The primary structure comprises 141 residues: Large ribosomal subunit protein uL11 (141 aa).

Belongs to the universal ribosomal protein uL11 family. In terms of assembly, part of the ribosomal stalk of the 50S ribosomal subunit. Interacts with L10 and the large rRNA to form the base of the stalk. L10 forms an elongated spine to which L12 dimers bind in a sequential fashion forming a multimeric L10(L12)X complex. One or more lysine residues are methylated.

Functionally, forms part of the ribosomal stalk which helps the ribosome interact with GTP-bound translation factors. In Methylacidiphilum infernorum (isolate V4) (Methylokorus infernorum (strain V4)), this protein is Large ribosomal subunit protein uL11.